We begin with the raw amino-acid sequence, 369 residues long: Chaperone protein DnaJ (369 aa).

Residues 4-69 enclose the J domain; sequence SYYEILEVEK…KKRALYDRYG (66 aa). The CR-type zinc finger occupies 130–207; it reads GCKKTIKAQY…CKGKTYILKD (78 aa). Cysteine 143, cysteine 146, cysteine 159, cysteine 162, cysteine 181, cysteine 184, cysteine 195, and cysteine 198 together coordinate Zn(2+). CXXCXGXG motif repeat units lie at residues 143–150, 159–166, 181–188, and 195–202; these read CESCDGTG, CKQCNGQG, CGACQGKG, and CQACKGKT.

This sequence belongs to the DnaJ family. Homodimer. Zn(2+) serves as cofactor.

The protein localises to the cytoplasm. In terms of biological role, participates actively in the response to hyperosmotic and heat shock by preventing the aggregation of stress-denatured proteins and by disaggregating proteins, also in an autonomous, DnaK-independent fashion. Unfolded proteins bind initially to DnaJ; upon interaction with the DnaJ-bound protein, DnaK hydrolyzes its bound ATP, resulting in the formation of a stable complex. GrpE releases ADP from DnaK; ATP binding to DnaK triggers the release of the substrate protein, thus completing the reaction cycle. Several rounds of ATP-dependent interactions between DnaJ, DnaK and GrpE are required for fully efficient folding. Also involved, together with DnaK and GrpE, in the DNA replication of plasmids through activation of initiation proteins. This chain is Chaperone protein DnaJ, found in Helicobacter pylori (strain J99 / ATCC 700824) (Campylobacter pylori J99).